The sequence spans 199 residues: Putative HMP/thiamine permease protein YkoE (199 aa).

A run of 6 helical transmembrane segments spans residues 9–29 (IVIM…FTHF), 40–60 (IAYE…AYMI), 63–83 (PGAA…LGNP), 85–105 (GPMV…VFLA), 114–134 (PVLM…DLFV), and 143–163 (GYLL…AGLL).

As to quaternary structure, the complex is composed of two ATP-binding proteins (YkoD), two transmembrane proteins (YkoC and YkoE) and a solute-binding protein (YkoF).

The protein localises to the cell membrane. Its function is as follows. Part of the ABC transporter complex YkoCDEF that could transport hydroxymethylpyrimidine (HMP) and/or thiamine. Could also transport other HMP-containing products. Probably responsible for the translocation of the substrate across the membrane. The chain is Putative HMP/thiamine permease protein YkoE (ykoE) from Bacillus subtilis (strain 168).